The chain runs to 305 residues: Methionyl-tRNA formyltransferase (305 aa).

Residue 110–113 (SLLP) coordinates (6S)-5,6,7,8-tetrahydrofolate.

This sequence belongs to the Fmt family.

The catalysed reaction is L-methionyl-tRNA(fMet) + (6R)-10-formyltetrahydrofolate = N-formyl-L-methionyl-tRNA(fMet) + (6S)-5,6,7,8-tetrahydrofolate + H(+). In terms of biological role, attaches a formyl group to the free amino group of methionyl-tRNA(fMet). The formyl group appears to play a dual role in the initiator identity of N-formylmethionyl-tRNA by promoting its recognition by IF2 and preventing the misappropriation of this tRNA by the elongation apparatus. The polypeptide is Methionyl-tRNA formyltransferase (Ureaplasma urealyticum serovar 10 (strain ATCC 33699 / Western)).